The primary structure comprises 547 residues: Aspartate 1-decarboxylase (547 aa).

At lysine 338 the chain carries N6-(pyridoxal phosphate)lysine.

It belongs to the group II decarboxylase family. It depends on pyridoxal 5'-phosphate as a cofactor.

It carries out the reaction L-aspartate + H(+) = beta-alanine + CO2. Its pathway is cofactor biosynthesis; (R)-pantothenate biosynthesis; beta-alanine from L-aspartate: step 1/1. Catalyzes the pyridoxal-dependent decarboxylation of aspartate to produce beta-alanine. Has weak activity with glutamate. The protein is Aspartate 1-decarboxylase of Aliivibrio fischeri (strain ATCC 700601 / ES114) (Vibrio fischeri).